The following is a 286-amino-acid chain: Protein FAM87A (286 aa).

2 consecutive transmembrane segments (helical) span residues 68-88 (YLHS…ETAL) and 161-181 (SFFV…GDML).

Belongs to the FAM87 family.

Its subcellular location is the membrane. This Homo sapiens (Human) protein is Protein FAM87A (FAM87A).